Here is a 255-residue protein sequence, read N- to C-terminus: Geranylgeranylglyceryl phosphate synthase (255 aa).

Positions 34 and 64 each coordinate Mg(2+). Sn-glycerol 1-phosphate contacts are provided by residues tyrosine 182–glycine 188, glycine 213–glycine 214, and glycine 235–asparagine 236.

The protein belongs to the GGGP/HepGP synthase family. Group II subfamily. Requires Mg(2+) as cofactor.

The protein resides in the cytoplasm. It carries out the reaction sn-glycerol 1-phosphate + (2E,6E,10E)-geranylgeranyl diphosphate = sn-3-O-(geranylgeranyl)glycerol 1-phosphate + diphosphate. Its pathway is membrane lipid metabolism; glycerophospholipid metabolism. Functionally, prenyltransferase that catalyzes the transfer of the geranylgeranyl moiety of geranylgeranyl diphosphate (GGPP) to the C3 hydroxyl of sn-glycerol-1-phosphate (G1P). This reaction is the first ether-bond-formation step in the biosynthesis of archaeal membrane lipids. This Saccharolobus islandicus (strain M.16.27) (Sulfolobus islandicus) protein is Geranylgeranylglyceryl phosphate synthase.